The chain runs to 271 residues: Norsolorinic acid ketoreductase (271 aa).

Residues M1–P22 form a disordered region. Residues I36, N112, Y185, K189, V216, and T218 each contribute to the NADP(+) site. Y185 acts as the Proton donor in catalysis. Residue K189 is the Lowers pKa of active site Tyr of the active site.

The protein belongs to the short-chain dehydrogenases/reductases (SDR) family.

The protein resides in the cytoplasm. Its subcellular location is the cytosol. The protein localises to the vacuole. The enzyme catalyses (1'S)-averantin + NADP(+) = norsolorinic acid + NADPH + H(+). The protein operates within mycotoxin biosynthesis; aflatoxin biosynthesis. Functionally, norsolorinic acid ketoreductase; part of the gene cluster that mediates the biosynthesis of aflatoxins, a group of polyketide-derived furanocoumarins, and part of the most toxic and carcinogenic compounds among the known mycotoxins. The four major aflatoxins produced by A.parasiticus are aflatoxin B1 (AFB1), aflatoxin B2 (AFB2), aflatoxin G1 (AFG1) and aflatoxin G2 (AFG2). Within the aflatoxin pathway, the norsolorinic acid ketoreductase aflD performs the second step by catalyzing the dehydration of norsolorinic acid (NOR) to form (1'S)-averantin (AVN). The biosynthesis of aflatoxins begins with the norsolorinic acid synthase aflC that combines a hexanoyl starter unit produced by the fatty acid synthase aflA/aflB and 7 malonyl-CoA extender units to synthesize the precursor NOR. The second step is the conversion of NOR to averantin and requires the norsolorinic acid ketoreductase aflD, which catalyzes the dehydration of norsolorinic acid to form (1'S)-averantin. The norsolorinic acid reductases aflE and aflF may also play a role in the conversion of NOR to AVN. The cytochrome P450 monooxygenase aflG then catalyzes the hydroxylation of AVN to 5'hydroxyaverantin (HAVN). The next step is performed by the 5'-hydroxyaverantin dehydrogenase aflH that transforms HAVN to 5'-oxoaverantin (OAVN) which is further converted to averufin (AVF) by aflK that plays a dual role in the pathway, as a 5'-oxoaverantin cyclase that mediates conversion of 5'-oxoaverantin, as well as a versicolorin B synthase in a later step in the pathway. The averufin oxidase aflI catalyzes the conversion of AVF to versiconal hemiacetal acetate (VHA). VHA is then the substrate for the versiconal hemiacetal acetate esterase aflJ to yield versiconal (VAL). Versicolorin B synthase aflK then converts VAL to versicolorin B (VERB) by closing the bisfuran ring of aflatoxin which is required for DNA-binding, thus giving to aflatoxin its activity as a mutagen. Then, the activity of the versicolorin B desaturase aflL leads to versicolorin A (VERA). A branch point starts from VERB since it can also be converted to dihydrodemethylsterigmatocystin (DMDHST), probably also by aflL, VERA being a precursor for aflatoxins B1 and G1, and DMDHST for aflatoxins B2 and G2. Next, the versicolorin reductase aflM and the cytochrome P450 monooxygenase aflN are involved in conversion of VERA to demethylsterigmatocystin (DMST). AflX and aflY seem also involved in this step, through probable aflX-mediated epoxide ring-opening step following versicolorin A oxidation and aflY-mediated Baeyer-Villiger oxidation required for the formation of the xanthone ring. The methyltransferase aflO then leads to the modification of DMST to sterigmatocystin (ST), and of DMDHST to dihydrosterigmatocystin (DHST). Both ST and DHST are then substrates of the O-methyltransferase aflP to yield O-methylsterigmatocystin (OMST) and dihydro-O-methylsterigmatocystin (DHOMST), respectively. Finally OMST is converted to aflatoxins B1 and G1, and DHOMST to aflatoxins B2 and G2, via the action of several enzymes including O-methylsterigmatocystin oxidoreductase aflQ, the cytochrome P450 monooxygenase aflU, but also the NADH-dependent flavin oxidoreductase nadA which is specifically required for the synthesis of AFG1. The sequence is that of Norsolorinic acid ketoreductase from Aspergillus parasiticus (strain ATCC 56775 / NRRL 5862 / SRRC 143 / SU-1).